We begin with the raw amino-acid sequence, 517 residues long: MGNYKSNLETKIGVVKNPILVSCRESIMENKKSFYGRFYIGPLEVGQGITLANALRRALLSELNGLAITTVEIEGVSHEYSTLMGVRESVLDILLNLKQIVLKSKKSVKRAQTAYIYCQGPGVIRAGDIILPSSIQCVDPEQYIATLSSDGILKMKVIIRQGKNYLVQTPNSLFFDEVSEFVLDKNNLAEKRSEKQSFQHKIFLQNSVNKKKWGKVEEKKEPKLSFFSHSGSRPSFLFKTKVGLKSKALTFSFQNSRSLYTISQNSKNKELFINLFKKQIYSILALKVSITKSQDPNNFSNLLCSFFLTSKNKTKPLFIDAVFMPVTKVNYTLEENKQKLFDEIYPIVSNDNLEKNWVKVKKSGFFLSNQQLSFEKNSLFEESKLQQNTNNEAKHKNNGNGKFVDSKLLKQSTTSNFDYNYWSLFSAELNNNSSSWTTLNSNIFFEHFNQSPKDIIILEIWTNGSILPRTALKHATQNLSNLFIKFQNAKMMKNSFFETNKTYTQTIRQLYEKYQNF.

This sequence belongs to the RNA polymerase alpha chain family. As to quaternary structure, in plastids the minimal PEP RNA polymerase catalytic core is composed of four subunits: alpha, beta, beta', and beta''. When a (nuclear-encoded) sigma factor is associated with the core the holoenzyme is formed, which can initiate transcription.

It localises to the plastid. The protein resides in the chloroplast. The catalysed reaction is RNA(n) + a ribonucleoside 5'-triphosphate = RNA(n+1) + diphosphate. DNA-dependent RNA polymerase catalyzes the transcription of DNA into RNA using the four ribonucleoside triphosphates as substrates. This Stigeoclonium helveticum (Green alga) protein is DNA-directed RNA polymerase subunit alpha (rpoA).